The chain runs to 83 residues: Cell division protein ZapB (83 aa).

Residues 7 to 80 (EMLEKLEAKV…RVRTLLGKMD (74 aa)) are a coiled coil.

The protein belongs to the ZapB family. As to quaternary structure, homodimer. The ends of the coiled-coil dimer bind to each other, forming polymers. Interacts with FtsZ.

The protein resides in the cytoplasm. Non-essential, abundant cell division factor that is required for proper Z-ring formation. It is recruited early to the divisome by direct interaction with FtsZ, stimulating Z-ring assembly and thereby promoting cell division earlier in the cell cycle. Its recruitment to the Z-ring requires functional FtsA or ZipA. This is Cell division protein ZapB from Photobacterium profundum (strain SS9).